Here is a 318-residue protein sequence, read N- to C-terminus: UDP-3-O-acylglucosamine N-acyltransferase (318 aa).

Histidine 231 serves as the catalytic Proton acceptor.

This sequence belongs to the transferase hexapeptide repeat family. LpxD subfamily. Homotrimer.

The catalysed reaction is a UDP-3-O-[(3R)-3-hydroxyacyl]-alpha-D-glucosamine + a (3R)-hydroxyacyl-[ACP] = a UDP-2-N,3-O-bis[(3R)-3-hydroxyacyl]-alpha-D-glucosamine + holo-[ACP] + H(+). Its pathway is bacterial outer membrane biogenesis; LPS lipid A biosynthesis. Functionally, catalyzes the N-acylation of UDP-3-O-acylglucosamine using 3-hydroxyacyl-ACP as the acyl donor. Is involved in the biosynthesis of lipid A, a phosphorylated glycolipid that anchors the lipopolysaccharide to the outer membrane of the cell. This is UDP-3-O-acylglucosamine N-acyltransferase from Campylobacter jejuni subsp. doylei (strain ATCC BAA-1458 / RM4099 / 269.97).